The chain runs to 240 residues: Adenosylcobinamide-GDP ribazoletransferase (240 aa).

Transmembrane regions (helical) follow at residues 31-51 (LLYY…ASHL), 57-77 (APLH…ALHL), 109-129 (IAVV…WVLV), 133-153 (VGAQ…GLFL), and 185-205 (LFCL…FAWL).

It belongs to the CobS family. It depends on Mg(2+) as a cofactor.

It is found in the cell inner membrane. It catalyses the reaction alpha-ribazole + adenosylcob(III)inamide-GDP = adenosylcob(III)alamin + GMP + H(+). It carries out the reaction alpha-ribazole 5'-phosphate + adenosylcob(III)inamide-GDP = adenosylcob(III)alamin 5'-phosphate + GMP + H(+). It participates in cofactor biosynthesis; adenosylcobalamin biosynthesis; adenosylcobalamin from cob(II)yrinate a,c-diamide: step 7/7. In terms of biological role, joins adenosylcobinamide-GDP and alpha-ribazole to generate adenosylcobalamin (Ado-cobalamin). Also synthesizes adenosylcobalamin 5'-phosphate from adenosylcobinamide-GDP and alpha-ribazole 5'-phosphate. This chain is Adenosylcobinamide-GDP ribazoletransferase, found in Pseudomonas putida (strain GB-1).